The sequence spans 321 residues: MVIRLFENDKQLEVFFSSLDKKKKYLLALSGGSDSLLLMYLLRSRGISFTAVHVDYGWRETSYQEACDLASLCEREQIPFILDRQEVANPMDFSDIENIARQYRYELFYRLCKERLFAGVFLGHHADDQAETILKRVFEGAHLGNLKGMARYGTYKGITLLRPLLHITKRQIVEALDNYRIEYVQDATNADERFLRARMREQLFPYLQEIFGKNIRQPLLFLAEDSAELREYLDQQAAPFLSQVIDNEIGQFLPVGQELLQTAFLTKWVCKQFFFKQGLVASKGFLQTVYDHLVRRSEARLRLRNRTVLVKARGVIIESIY.

30 to 35 (SGGSDS) is a binding site for ATP.

Belongs to the tRNA(Ile)-lysidine synthase family.

It localises to the cytoplasm. The enzyme catalyses cytidine(34) in tRNA(Ile2) + L-lysine + ATP = lysidine(34) in tRNA(Ile2) + AMP + diphosphate + H(+). Its function is as follows. Ligates lysine onto the cytidine present at position 34 of the AUA codon-specific tRNA(Ile) that contains the anticodon CAU, in an ATP-dependent manner. Cytidine is converted to lysidine, thus changing the amino acid specificity of the tRNA from methionine to isoleucine. This is tRNA(Ile)-lysidine synthase from Chlamydia muridarum (strain MoPn / Nigg).